The chain runs to 108 residues: Small ribosomal subunit protein bS18 (108 aa).

Residues M1–I12 show a composition bias toward polar residues. The interval M1–K33 is disordered.

This sequence belongs to the bacterial ribosomal protein bS18 family. As to quaternary structure, part of the 30S ribosomal subunit. Forms a tight heterodimer with protein bS6.

Binds as a heterodimer with protein bS6 to the central domain of the 16S rRNA, where it helps stabilize the platform of the 30S subunit. The protein is Small ribosomal subunit protein bS18 of Mycoplasmoides gallisepticum (strain R(low / passage 15 / clone 2)) (Mycoplasma gallisepticum).